The chain runs to 115 residues: U2-ctenitoxin-Pn1b (115 aa).

Positions 1-17 (MKVAVIILSILVLAAAS) are cleaved as a signal peptide. Residues 18 to 61 (ESIEEYREDFSRPNAMERSANDWIPTAPSAVERSADFAVEELER) constitute a propeptide that is removed on maturation. 5 disulfides stabilise this stretch: C64–C78, C71–C84, C75–C113, C77–C98, and C86–C96. Residue K115 is a propeptide.

Belongs to the neurotoxin 03 (Tx2) family. 04 subfamily. As to expression, expressed by the venom gland.

It localises to the secreted. Blocks voltage-gated sodium channels (Nav). The polypeptide is U2-ctenitoxin-Pn1b (Phoneutria nigriventer (Brazilian armed spider)).